The following is a 204-amino-acid chain: Rho GDP-dissociation inhibitor 1 (204 aa).

The disordered stretch occupies residues 1-36; it reads MAEQEPTAEQLAQIAAENEEDEHSVNYKPPAQKSIQ. Alanine 2 carries the post-translational modification N-acetylalanine. Phosphoserine is present on serine 34. At lysine 43 the chain carries N6-acetyllysine. Serine 47 bears the Phosphoserine mark. The segment at 66–83 is hydrophobic; that stretch reads NVPNVVVTRLTLVCSTAP. Position 101 is a phosphoserine; by PKA (serine 101). Lysine 105 carries the N6-acetyllysine modification. Phosphoserine; by PKC is present on serine 115. An N6-acetyllysine modification is found at lysine 127. Glycyl lysine isopeptide (Lys-Gly) (interchain with G-Cter in SUMO1); alternate cross-links involve residues lysine 138 and lysine 141. Residues lysine 138 and lysine 141 each participate in a glycyl lysine isopeptide (Lys-Gly) (interchain with G-Cter in SUMO2); alternate cross-link. Residue lysine 141 is modified to N6-acetyllysine; alternate. Lysine 141 is modified (N6-succinyllysine; alternate). Lysine 178 carries the post-translational modification N6-acetyllysine.

This sequence belongs to the Rho GDI family. As to quaternary structure, monomer. Interacts with FER. Interacts with PLXNB3. Forms a heterodimer with RAC1. Interacts with RHOA, the affinity is increased by three orders of magnitude when RHOA is prenylated. Interacts with PSMD10; the interaction increases ARHGDIA association with RHOA, leading to ARHGDIA-mediated inactivation of RHOA and ROCK and prolonged AKT activation. Interacts with KANK2; the interaction is direct and may regulate the interaction of ARHGDIA with RHOA, RAC1 and CDC42. Interacts with RHOC. Interacts with CDC42. Interacts with NGFR (via death domain); NGFR binding decreases the affinity for RHOA. In terms of tissue distribution, brain, lung, thymus, spleen, small intestine, and kidney, and weakly in heart and liver.

Its subcellular location is the cytoplasm. Its function is as follows. Controls Rho proteins homeostasis. Regulates the GDP/GTP exchange reaction of the Rho proteins by inhibiting the dissociation of GDP from them, and the subsequent binding of GTP to them. Retains Rho proteins such as CDC42, RAC1 and RHOA in an inactive cytosolic pool, regulating their stability and protecting them from degradation. Actively involved in the recycling and distribution of activated Rho GTPases in the cell, mediates extraction from membranes of both inactive and activated molecules due its exceptionally high affinity for prenylated forms. Through the modulation of Rho proteins, may play a role in cell motility regulation. In glioma cells, inhibits cell migration and invasion by mediating the signals of SEMA5A and PLXNB3 that lead to inactivation of RAC1. This chain is Rho GDP-dissociation inhibitor 1 (ARHGDIA), found in Bos taurus (Bovine).